The chain runs to 38 residues: Cytochrome b6-f complex subunit 5 (38 aa).

Residues leucine 5–alanine 25 traverse the membrane as a helical segment.

This sequence belongs to the PetG family. In terms of assembly, the 4 large subunits of the cytochrome b6-f complex are cytochrome b6, subunit IV (17 kDa polypeptide, PetD), cytochrome f and the Rieske protein, while the 4 small subunits are PetG, PetL, PetM and PetN. The complex functions as a dimer.

Its subcellular location is the cellular thylakoid membrane. Component of the cytochrome b6-f complex, which mediates electron transfer between photosystem II (PSII) and photosystem I (PSI), cyclic electron flow around PSI, and state transitions. PetG is required for either the stability or assembly of the cytochrome b6-f complex. In Crocosphaera subtropica (strain ATCC 51142 / BH68) (Cyanothece sp. (strain ATCC 51142)), this protein is Cytochrome b6-f complex subunit 5.